The sequence spans 197 residues: MPMKSLRNDHGTLKAMIGSDFNELTIAAKNLATHAFTLTGLGFGTSVLEWVASIAAIYLLVLDRTNWKTNMLTSLLIPYIFFSLPSLIFGIFRGEIGKWIAFVAVVVQLFFPKHAREYLELPVALVLLAVVAPNLIAGTFRDSWIGLAICLGIGCYLLQEHIRASGGFRNAFTKANGISNTVGIICLVVFPVWALIF.

Topologically, residues 1–40 (MPMKSLRNDHGTLKAMIGSDFNELTIAAKNLATHAFTLTG) are extracellular. A helical transmembrane segment spans residues 41–61 (LGFGTSVLEWVASIAAIYLLV). Residues 62–71 (LDRTNWKTNM) are Cytoplasmic-facing. Residues 72 to 92 (LTSLLIPYIFFSLPSLIFGIF) traverse the membrane as a helical segment. Residues 93-94 (RG) lie on the Extracellular side of the membrane. A helical membrane pass occupies residues 95–115 (EIGKWIAFVAVVVQLFFPKHA). Topologically, residues 116 to 117 (RE) are cytoplasmic. The chain crosses the membrane as a helical span at residues 118-138 (YLELPVALVLLAVVAPNLIAG). Residues 139 to 141 (TFR) lie on the Extracellular side of the membrane. The helical transmembrane segment at 142–162 (DSWIGLAICLGIGCYLLQEHI) threads the bilayer. The Cytoplasmic segment spans residues 163-176 (RASGGFRNAFTKAN). A helical membrane pass occupies residues 177 to 197 (GISNTVGIICLVVFPVWALIF).

It belongs to the Cold-regulated 413 protein family.

The protein localises to the membrane. This chain is Cold-regulated 413 plasma membrane protein 1 (COR413PM1), found in Arabidopsis thaliana (Mouse-ear cress).